Consider the following 876-residue polypeptide: ATP-dependent helicase Lhr-Core (876 aa).

7 residues coordinate ATP: Q37, K60, T61, D175, E176, R374, and H377. In terms of domain architecture, Helicase ATP-binding spans 41-232; that stretch reads IPLIKKGKNV…FLVGGNGDYE (192 aa). Positions 175–178 match the DEAH box motif; that stretch reads DEIH. Residues 249–421 enclose the Helicase C-terminal domain; it reads PVKDLVHATE…NIHVPENPLD (173 aa). Residues 422–506 are WH domain; that stretch reads VLTQLIVAAS…IFFLNSGTIP (85 aa). Residues 507-876 are domain 4; it reads DEAMIPVKME…DLEYTEAGIK (370 aa).

This sequence belongs to the Lhr helicase family. Lhr-Core subfamily. As to quaternary structure, monomer.

It carries out the reaction Couples ATP hydrolysis with the unwinding of duplex DNA by translocating in the 3'-5' direction.. It catalyses the reaction ATP + H2O = ADP + phosphate + H(+). In terms of biological role, probably part of a 4-gene DNA damage response locus in which the upstream ups system, in combination with this downstream locus, functions in homologous recombination to rescue Sulfolobales from DNA-damaging threats. DNA helicase that translocates in a 3'-5' direction on single-stranded (ss)DNA. Binds Holliday junction (HJ) DNA, Y-shaped DNA, DNA with a 3'-overhang and single-stranded (ss)DNA with high affinity; binds double-stranded (ds)DNA with less affinity. Has helicase activity on DNA with a 3'-overhang, Y-shaped DNA and HJ DNA. Does not unwind blunt-ended dsDNA or DNA with a 5'-overhang. This is ATP-dependent helicase Lhr-Core from Sulfolobus acidocaldarius (strain ATCC 33909 / DSM 639 / JCM 8929 / NBRC 15157 / NCIMB 11770).